The sequence spans 382 residues: Galactokinase (382 aa).

Substrate is bound at residue 34–37 (EHTD). 124 to 130 (GAGLSSS) provides a ligand contact to ATP. Mg(2+) is bound by residues Ser-130 and Glu-162. Residue Asp-174 is the Proton acceptor of the active site. Tyr-223 contributes to the substrate binding site.

It belongs to the GHMP kinase family. GalK subfamily.

The protein localises to the cytoplasm. The catalysed reaction is alpha-D-galactose + ATP = alpha-D-galactose 1-phosphate + ADP + H(+). It functions in the pathway carbohydrate metabolism; galactose metabolism. Catalyzes the transfer of the gamma-phosphate of ATP to D-galactose to form alpha-D-galactose-1-phosphate (Gal-1-P). This chain is Galactokinase, found in Salmonella heidelberg (strain SL476).